A 765-amino-acid chain; its full sequence is Phosphoribosylformylglycinamidine synthase subunit PurL (765 aa).

H41 is an active-site residue. Positions 44 and 83 each coordinate ATP. E85 is a binding site for Mg(2+). Substrate contacts are provided by residues 86–89 (SHNH) and R108. H87 serves as the catalytic Proton acceptor. Mg(2+) is bound at residue D109. A substrate-binding site is contributed by Q232. Residue D260 coordinates Mg(2+). 304–306 (ESQ) serves as a coordination point for substrate. 2 residues coordinate ATP: D503 and G540. Position 541 (N541) interacts with Mg(2+). S543 is a substrate binding site.

This sequence belongs to the FGAMS family. Monomer. Part of the FGAM synthase complex composed of 1 PurL, 1 PurQ and 2 PurS subunits.

The protein localises to the cytoplasm. It catalyses the reaction N(2)-formyl-N(1)-(5-phospho-beta-D-ribosyl)glycinamide + L-glutamine + ATP + H2O = 2-formamido-N(1)-(5-O-phospho-beta-D-ribosyl)acetamidine + L-glutamate + ADP + phosphate + H(+). The protein operates within purine metabolism; IMP biosynthesis via de novo pathway; 5-amino-1-(5-phospho-D-ribosyl)imidazole from N(2)-formyl-N(1)-(5-phospho-D-ribosyl)glycinamide: step 1/2. Functionally, part of the phosphoribosylformylglycinamidine synthase complex involved in the purines biosynthetic pathway. Catalyzes the ATP-dependent conversion of formylglycinamide ribonucleotide (FGAR) and glutamine to yield formylglycinamidine ribonucleotide (FGAM) and glutamate. The FGAM synthase complex is composed of three subunits. PurQ produces an ammonia molecule by converting glutamine to glutamate. PurL transfers the ammonia molecule to FGAR to form FGAM in an ATP-dependent manner. PurS interacts with PurQ and PurL and is thought to assist in the transfer of the ammonia molecule from PurQ to PurL. This chain is Phosphoribosylformylglycinamidine synthase subunit PurL, found in Synechococcus sp. (strain WH7803).